The chain runs to 249 residues: Dihydroneopterin 2',3'-cyclic phosphate phosphodiesterase (249 aa).

The region spanning 58 to 172 is the HD domain; sequence LIEHTISVTK…VHYADEADSK (115 aa).

Homododecamer. Fe(2+) serves as cofactor. The cofactor is Zn(2+).

The enzyme catalyses 7,8-dihydroneopterin 2',3'-cyclic phosphate + H2O = 7,8-dihydroneopterin 3'-phosphate + H(+). The catalysed reaction is 7,8-dihydroneopterin 2',3'-cyclic phosphate + H2O = 7,8-dihydroneopterin 2'-phosphate + H(+). It participates in cofactor biosynthesis; 5,6,7,8-tetrahydromethanopterin biosynthesis. In terms of biological role, cyclic phosphodiesterase that hydrolyzes the cyclic phosphate of 7,8-dihydroneopterin 2',3'-cyclic phosphate (H2N-cP) and converts it to a mixture of 7,8-dihydroneopterin 2'-phosphate (H2N-2'P) and 7,8-dihydroneopterin 3'-phosphate (H2N-3'P). Is also able to utilize other phosphodiesters as substrates in vitro: hydrolysis of bis-pNPP and pNPPC produces nitrophenyl phosphate, and that of 2',3'-cAMP produces 3'-AMP. ATP, 3',5'-cAMP, GTP, 3',5'-cGMP, and 4',5'-cFMN cannot serve as substrates. In Methanocaldococcus jannaschii (strain ATCC 43067 / DSM 2661 / JAL-1 / JCM 10045 / NBRC 100440) (Methanococcus jannaschii), this protein is Dihydroneopterin 2',3'-cyclic phosphate phosphodiesterase (mptB).